Here is a 454-residue protein sequence, read N- to C-terminus: Maintenance of mitochondrial morphology protein 1 (454 aa).

The Lumenal portion of the chain corresponds to 1–128 (MSMVIGIGDL…QSSGWGFAHG (128 aa)). Residues 129-149 (LLVGQLSVVAVLAFFIKFFIF) form a helical membrane-spanning segment. The Cytoplasmic portion of the chain corresponds to 150-454 (GNSSMARPLM…SESETAVDSN (305 aa)). Residues 207–430 (QSESLDWFNV…EPRFQLIELP (224 aa)) form the SMP-LTD domain.

The protein belongs to the MMM1 family. Homodimer. Component of the ER-mitochondria encounter structure (ERMES) or MDM complex, composed of MMM1, MDM10, MDM12 and MDM34. An MMM1 homodimer associates with one molecule of MDM12 on each side in a pairwise head-to-tail manner, and the SMP-LTD domains of MMM1 and MDM12 generate a continuous hydrophobic tunnel for phospholipid trafficking.

It localises to the endoplasmic reticulum membrane. In terms of biological role, component of the ERMES/MDM complex, which serves as a molecular tether to connect the endoplasmic reticulum (ER) and mitochondria. Components of this complex are involved in the control of mitochondrial shape and protein biogenesis, and function in nonvesicular lipid trafficking between the ER and mitochondria. The MDM12-MMM1 subcomplex functions in the major beta-barrel assembly pathway that is responsible for biogenesis of all outer membrane beta-barrel proteins, and acts in a late step after the SAM complex. The MDM10-MDM12-MMM1 subcomplex further acts in the TOM40-specific pathway after the action of the MDM12-MMM1 complex. Essential for establishing and maintaining the structure of mitochondria and maintenance of mtDNA nucleoids. The polypeptide is Maintenance of mitochondrial morphology protein 1 (Komagataella phaffii (strain GS115 / ATCC 20864) (Yeast)).